A 195-amino-acid polypeptide reads, in one-letter code: Endoribonuclease YbeY (195 aa).

Zn(2+) contacts are provided by His153, His157, and His163.

This sequence belongs to the endoribonuclease YbeY family. Zn(2+) is required as a cofactor.

The protein localises to the cytoplasm. Single strand-specific metallo-endoribonuclease involved in late-stage 70S ribosome quality control and in maturation of the 3' terminus of the 16S rRNA. The chain is Endoribonuclease YbeY from Prochlorococcus marinus (strain SARG / CCMP1375 / SS120).